Consider the following 333-residue polypeptide: CMP-N-acetylneuraminate-beta-galactosamide-alpha-2,3-sialyltransferase 4 (333 aa).

Residues 1 to 8 are Cytoplasmic-facing; that stretch reads MTSKSHWK. Residues 9-26 form a helical; Signal-anchor for type II membrane protein membrane-spanning segment; it reads LLALALVLVVVMVWYSIS. At 27–333 the chain is on the lumenal side; sequence REDRYIEFFY…MGAVKNLTYF (307 aa). Residues Asn-61, Asn-131, Asn-310, and Asn-329 are each glycosylated (N-linked (GlcNAc...) asparagine). An intrachain disulfide couples Cys-120 to Cys-273.

Belongs to the glycosyltransferase 29 family. As to expression, broadly expressed among tissues with highest levels in the small intestine and colon.

Its subcellular location is the golgi apparatus. The protein resides in the golgi stack membrane. It catalyses the reaction a beta-D-galactosyl-(1-&gt;3)-N-acetyl-beta-D-galactosaminyl derivative + CMP-N-acetyl-beta-neuraminate = an N-acetyl-alpha-neuraminyl-(2-&gt;3)-beta-D-galactosyl-(1-&gt;3)-N-acetyl-beta-D-galactosaminyl derivative + CMP + H(+). The enzyme catalyses a beta-D-galactosyl-(1-&gt;3)-N-acetyl-alpha-D-galactosaminyl derivative + CMP-N-acetyl-beta-neuraminate = an N-acetyl-alpha-neuraminyl-(2-&gt;3)-beta-D-galactosyl-(1-&gt;3)-N-acetyl-alpha-D-galactosaminyl derivative + CMP + H(+). The catalysed reaction is a beta-D-galactosyl-(1-&gt;4)-N-acetyl-beta-D-glucosaminyl derivative + CMP-N-acetyl-beta-neuraminate = an N-acetyl-alpha-neuraminyl-(2-&gt;3)-beta-D-galactosyl-(1-&gt;4)-N-acetyl-beta-D-glucosaminyl derivative + CMP + H(+). It carries out the reaction a ganglioside GM1 (d18:1(4E)) + CMP-N-acetyl-beta-neuraminate = a ganglioside GD1a (d18:1(4E)) + CMP + H(+). It catalyses the reaction a ganglioside GA1 (d18:1(4E)) + CMP-N-acetyl-beta-neuraminate = a ganglioside GM1b (d18:1(4E)) + CMP + H(+). The enzyme catalyses a ganglioside GT1c (d18:1(4E)) + CMP-N-acetyl-beta-neuraminate = a ganglioside GQ1c (d18:1(4E)) + CMP + H(+). The catalysed reaction is a neolactoside nLc4Cer + CMP-N-acetyl-beta-neuraminate = a neolactoside IV(3)-alpha-NeuAc-nLc4Cer + CMP + H(+). It carries out the reaction a neolactoside nLc4Cer(d18:1(4E)) + CMP-N-acetyl-beta-neuraminate = a neolactoside IV(3)-alpha-NeuAc-nLc4Cer(d18:1(4E)) + CMP + H(+). The protein operates within protein modification; protein glycosylation. A beta-galactoside alpha2-3 sialyltransferase involved in terminal sialylation of glycoproteins and glycolipids. Catalyzes the transfer of sialic acid (N-acetyl-neuraminic acid; Neu5Ac) from the nucleotide sugar donor CMP-Neu5Ac onto acceptor Galbeta-(1-&gt;3)-GalNAc- and Galbeta-(1-&gt;4)-GlcNAc-terminated glycoconjugates through an alpha2-3 linkage. Plays a major role in hemostasis. Responsible for sialylation of plasma VWF/von Willebrand factor, preventing its recognition by asialoglycoprotein receptors (ASGPR) and subsequent clearance. Regulates ASGPR-mediated clearance of platelets. Participates in the biosynthesis of the sialyl Lewis X epitopes, both on O- and N-glycans, which are recognized by SELE/E-selectin, SELP/P-selectin and SELL/L-selectin. Essential for selectin-mediated rolling and adhesion of leukocytes during extravasation. Contributes to adhesion and transendothelial migration of neutrophils likely through terminal sialylation of CXCR2. In glycosphingolipid biosynthesis, sialylates GM1 and GA1 gangliosides to form GD1a and GM1b, respectively. Metabolizes brain c-series ganglioside GT1c forming GQ1c. Synthesizes ganglioside LM1 (IV3Neu5Ac-nLc4Cer), a major structural component of peripheral nerve myelin. In Mus musculus (Mouse), this protein is CMP-N-acetylneuraminate-beta-galactosamide-alpha-2,3-sialyltransferase 4 (St3gal4).